Here is a 169-residue protein sequence, read N- to C-terminus: Orotate phosphoribosyltransferase (169 aa).

Residues Arg-86, Lys-90, His-92, and 111–119 (EDVTTSGGS) each bind 5-phospho-alpha-D-ribose 1-diphosphate. Thr-115 and Arg-143 together coordinate orotate.

Belongs to the purine/pyrimidine phosphoribosyltransferase family. PyrE subfamily. Homodimer. Mg(2+) serves as cofactor.

It catalyses the reaction orotidine 5'-phosphate + diphosphate = orotate + 5-phospho-alpha-D-ribose 1-diphosphate. It functions in the pathway pyrimidine metabolism; UMP biosynthesis via de novo pathway; UMP from orotate: step 1/2. Its function is as follows. Catalyzes the transfer of a ribosyl phosphate group from 5-phosphoribose 1-diphosphate to orotate, leading to the formation of orotidine monophosphate (OMP). This is Orotate phosphoribosyltransferase from Methanocorpusculum labreanum (strain ATCC 43576 / DSM 4855 / Z).